Here is a 245-residue protein sequence, read N- to C-terminus: E3 ubiquitin-protein ligase RNF138 (245 aa).

Residues 18-58 form an RING-type zinc finger; sequence CPVCQEVLKTPVRTAACQHVFCRKCFLTAMRESGIHCPLCR. Zn(2+) is bound by residues cysteine 86, cysteine 89, histidine 101, and cysteine 105. The C2HC RNF-type zinc-finger motif lies at 86 to 105; the sequence is CRCCSKKIKFYRMRHHYKSC. The tract at residues 128–154 is disordered; that stretch reads VRSSNRSETSASDNTETYQEDTSSSGH. Threonine 142 is modified (phosphothreonine). 2 C2H2-type zinc fingers span residues 157-180 and 187-215; these read FKCPLCQESNFTRQRLLDHCNSNH and VTCPICVSLPWGDPSQITRNFVSHLNQRH. Positions 225–243 constitute a UIM domain; that stretch reads LQLDEETQYQTAVEESFQV.

As to quaternary structure, interacts with NLK. Interacts with XRCC5/Ku80. Interacts with RBBP8/CtIP. Post-translationally, auto-ubiquitinated.

It localises to the chromosome. The enzyme catalyses S-ubiquitinyl-[E2 ubiquitin-conjugating enzyme]-L-cysteine + [acceptor protein]-L-lysine = [E2 ubiquitin-conjugating enzyme]-L-cysteine + N(6)-ubiquitinyl-[acceptor protein]-L-lysine.. It functions in the pathway protein modification; protein ubiquitination. E3 ubiquitin-protein ligase involved in DNA damage response by promoting DNA resection and homologous recombination. Recruited to sites of double-strand breaks following DNA damage and specifically promotes double-strand break repair via homologous recombination. Two different, non-exclusive, mechanisms have been proposed. According to a report, regulates the choice of double-strand break repair by favoring homologous recombination over non-homologous end joining (NHEJ): acts by mediating ubiquitination of XRCC5/Ku80, leading to remove the Ku complex from DNA breaks, thereby promoting homologous recombination. According to another report, cooperates with UBE2Ds E2 ubiquitin ligases (UBE2D1, UBE2D2, UBE2D3 or UBE2D4) to promote homologous recombination by mediating ubiquitination of RBBP8/CtIP. Together with NLK, involved in the ubiquitination and degradation of TCF/LEF. Also exhibits auto-ubiquitination activity in combination with UBE2K. May act as a negative regulator in the Wnt/beta-catenin-mediated signaling pathway. This Mus musculus (Mouse) protein is E3 ubiquitin-protein ligase RNF138.